The following is a 381-amino-acid chain: Layilin (381 aa).

The first 24 residues, 1–24, serve as a signal peptide directing secretion; the sequence is MQPGAALQAMLLAVLLAKPRDSKG. At 25–235 the chain is on the extracellular side; it reads RLLSASDLDP…ERREAALNLA (211 aa). In terms of domain architecture, C-type lectin spans 45–185; sequence TRRPCYKVIY…CNMKNNFICK (141 aa). Intrachain disulfides connect Cys-71/Cys-184 and Cys-150/Cys-176. Asn-117 carries N-linked (GlcNAc...) asparagine glycosylation. Residues 236-256 traverse the membrane as a helical segment; sequence YILIPSIPLFLLLVVTSAVCW. Residues 257–381 are Cytoplasmic-facing; that stretch reads VWICRRKREQ…SGWVENEIYY (125 aa). Residues Ser-286 and Ser-299 each carry the phosphoserine modification. Positions 330–374 are interaction with NF2; the sequence is DYENIAVNPSESGFVTLASMESGFVTNDIYEFSPDRMGRSKESGW. Residues 337 to 381 are interaction with TLN1; that stretch reads NPSESGFVTLASMESGFVTNDIYEFSPDRMGRSKESGWVENEIYY. 5 repeat units span residues 340 to 344, 350 to 354, 356 to 359, 371 to 375, and 377 to 380. The segment at 340–375 is 3 X 5 AA repeats of E-S-G-X-V; the sequence is ESGFVTLASMESGFVTNDIYEFSPDRMGRSKESGWV. The segment at 356 to 380 is 2 X 4 AA repeats of N-X-I-Y; that stretch reads NDIYEFSPDRMGRSKESGWVENEIY.

In terms of assembly, interacts with TLN1. Interacts with NF2 and RDX.

Its subcellular location is the membrane. Receptor for hyaluronate. This Mus musculus (Mouse) protein is Layilin (Layn).